We begin with the raw amino-acid sequence, 357 residues long: Type II methyltransferase M1.HgaI (357 aa).

Positions 5–357 (IMGLSLFSSA…NITREIFNEN (353 aa)) constitute an SAM-dependent MTase C5-type domain. The active site involves Cys-83.

This sequence belongs to the class I-like SAM-binding methyltransferase superfamily. C5-methyltransferase family.

The enzyme catalyses a 2'-deoxycytidine in DNA + S-adenosyl-L-methionine = a 5-methyl-2'-deoxycytidine in DNA + S-adenosyl-L-homocysteine + H(+). A methylase that recognizes DNA with the sequence 5'-GCGTC-3', methylates C-2, and protects the DNA from cleavage by the HgaI endonuclease. The protein is Type II methyltransferase M1.HgaI (hgaIAM) of Avibacterium volantium (Pasteurella volantium).